Here is a 708-residue protein sequence, read N- to C-terminus: Pre-mRNA-splicing factor SPP382 (708 aa).

The G-patch domain occupies 61-108 (TYGIGAKLLSSMGYVAGKGLGKDGSGITTPIETQSRPMHNAGLGMFSN).

In terms of assembly, component of the NTR complex (NTC-related complex), composed of NTR1, NTR2 and PRP43. Interacts with CLF1 and NTR2. Interacts with PRP43 and PRP45.

The protein localises to the cytoplasm. It is found in the nucleus. Its function is as follows. Involved in pre-mRNA splicing and spliceosome disassembly. Promotes release of excised lariat intron from the spliceosome by acting as a receptor for PRP43. This targeting of PRP43 leads to disassembly of the spliceosome with the separation of the U2, U5, U6 snRNPs and the NTC complex. The sequence is that of Pre-mRNA-splicing factor SPP382 (SPP382) from Saccharomyces cerevisiae (strain ATCC 204508 / S288c) (Baker's yeast).